Reading from the N-terminus, the 70-residue chain is Cytoinsectotoxin-2c (70 aa).

Belongs to the cationic peptide 06 (cytoinsectotoxin) family. In terms of tissue distribution, expressed by the venom gland.

Its subcellular location is the secreted. Insecticidal and antimicrobial peptide. Has insecticidal activity against larvae of flesh fly S.carnaria. Has antibacterial activity against Gram-positive bacterium B.subtilis B-501 (MIC=1.25 uM) and Gram-negative bacterium E.coli DH5alpha (MIC=2.5 uM). In Lachesana tarabaevi (Spider), this protein is Cytoinsectotoxin-2c.